The following is a 305-amino-acid chain: Ornithine carbamoyltransferase (305 aa).

Carbamoyl phosphate is bound by residues 53–56 (STRT), Q80, R104, and 131–134 (HPCQ). L-ornithine is bound by residues N162, D219, and 223–224 (SM). Carbamoyl phosphate is bound by residues 259–260 (CL) and R287.

This sequence belongs to the aspartate/ornithine carbamoyltransferase superfamily. OTCase family.

It localises to the cytoplasm. The catalysed reaction is carbamoyl phosphate + L-ornithine = L-citrulline + phosphate + H(+). It participates in amino-acid biosynthesis; L-arginine biosynthesis; L-arginine from L-ornithine and carbamoyl phosphate: step 1/3. Reversibly catalyzes the transfer of the carbamoyl group from carbamoyl phosphate (CP) to the N(epsilon) atom of ornithine (ORN) to produce L-citrulline. The chain is Ornithine carbamoyltransferase from Psychrobacter cryohalolentis (strain ATCC BAA-1226 / DSM 17306 / VKM B-2378 / K5).